We begin with the raw amino-acid sequence, 299 residues long: CDP-abequose synthase (299 aa).

Thr117 is a substrate binding site. Tyr134 functions as the Proton acceptor in the catalytic mechanism.

Belongs to the NAD(P)-dependent epimerase/dehydratase family.

The catalysed reaction is CDP-alpha-D-abequose + NADP(+) = CDP-4-dehydro-3,6-dideoxy-alpha-D-glucose + NADPH + H(+). It functions in the pathway bacterial outer membrane biogenesis; LPS O-antigen biosynthesis. This Salmonella typhimurium (strain LT2 / SGSC1412 / ATCC 700720) protein is CDP-abequose synthase (rfbJ).